Consider the following 613-residue polypeptide: Laccase 1 (613 aa).

Residues Met1–Ala20 form the signal peptide. 2 consecutive Plastocyanin-like domains span residues Ile29–Lys142 and Tyr171–Pro359. A glycan (N-linked (GlcNAc...) asparagine) is linked at Asn74. His78, His80, His122, and His124 together coordinate Cu cation. Asn256, Asn279, Asn444, Asn468, and Asn484 each carry an N-linked (GlcNAc...) asparagine glycan. The region spanning Asn468–Gly598 is the Plastocyanin-like 3 domain. Residues His506, His509, and His511 each coordinate Cu cation. Residue Asn526 is glycosylated (N-linked (GlcNAc...) asparagine). Residues His580, Cys581, His582, and His586 each coordinate Cu cation.

It belongs to the multicopper oxidase family. Requires Cu cation as cofactor.

The protein localises to the cell surface. It participates in pigment biosynthesis. Functionally, laccase; part of the Pks1 gene cluster that mediates the biosynthesis of an anthraquinone derivative pigment that contributes to conidial pigmentation that provides protection from UV radiation, heat and cold stress. The polyketide synthase Pks1 produces 1-acetyl-2,4,6,8-tetrahydroxy-9,10-anthraquinone though condensation of acetyl-CoA with malonyl-CoA. The dehydratase EthD and the laccase Mlac1 further convert the anthraquinone derivative into the final conidial pigment. This is Laccase 1 from Metarhizium guizhouense (strain ARSEF 977).